The sequence spans 600 residues: uncharacterized protein (600 aa).

2 consecutive 4Fe-4S ferredoxin-type domains span residues 14-44 (RLAI…MGEK) and 53-82 (GKPV…IIGL). 2 ABC transporter domains span residues 77-318 (ISII…YLYG) and 348-563 (LLSY…LKEM). ATP contacts are provided by residues 117–124 (GQNGIGKS) and 380–387 (GPNGIGKT). Residues 569 to 594 (RDPETGRPRANKEGSQRDIMQKEKGE) are compositionally biased toward basic and acidic residues. Residues 569–600 (RDPETGRPRANKEGSQRDIMQKEKGEYYYVDE) are disordered.

This sequence belongs to the ABC transporter superfamily.

This is an uncharacterized protein from Methanocaldococcus jannaschii (strain ATCC 43067 / DSM 2661 / JAL-1 / JCM 10045 / NBRC 100440) (Methanococcus jannaschii).